A 421-amino-acid polypeptide reads, in one-letter code: Histidine--tRNA ligase (421 aa).

This sequence belongs to the class-II aminoacyl-tRNA synthetase family. In terms of assembly, homodimer.

It is found in the cytoplasm. The enzyme catalyses tRNA(His) + L-histidine + ATP = L-histidyl-tRNA(His) + AMP + diphosphate + H(+). This is Histidine--tRNA ligase from Francisella tularensis subsp. tularensis (strain SCHU S4 / Schu 4).